The chain runs to 623 residues: Transketolase (623 aa).

An N-acetylmethionine modification is found at Met1. Lys6 and Lys11 each carry N6-acetyllysine. Position 37 (His37) interacts with substrate. Positions 40 and 77 each coordinate thiamine diphosphate. Position 104 is a phosphoserine (Ser104). Position 123-125 (123-125) interacts with thiamine diphosphate; it reads GSL. Lys144 is subject to N6-acetyllysine. Residue Asp155 coordinates Mg(2+). Thiamine diphosphate is bound by residues Gly156 and Asn185. Positions 185 and 187 each coordinate Mg(2+). N6-acetyllysine occurs at positions 204, 232, and 241. Residues Lys244 and His258 each coordinate thiamine diphosphate. His258 provides a ligand contact to substrate. Lys260 bears the N6-acetyllysine mark. The residue at position 275 (Tyr275) is a Phosphotyrosine. Thr287 carries the post-translational modification Phosphothreonine. Ser295 bears the Phosphoserine mark. Arg318 serves as a coordination point for substrate. A Glycyl lysine isopeptide (Lys-Gly) (interchain with G-Cter in SUMO2) cross-link involves residue Lys352. The active-site Proton donor is the Glu366. Position 392 (Phe392) interacts with thiamine diphosphate. Positions 416 and 424 each coordinate substrate. Thiamine diphosphate is bound at residue Gln428. Arg474 is a binding site for substrate. Residues Lys538 and Lys603 each carry the N6-acetyllysine modification.

Belongs to the transketolase family. As to quaternary structure, homodimer. Requires Mg(2+) as cofactor. Ca(2+) is required as a cofactor. Mn(2+) serves as cofactor. It depends on Co(2+) as a cofactor. The cofactor is thiamine diphosphate.

The enzyme catalyses D-sedoheptulose 7-phosphate + D-glyceraldehyde 3-phosphate = aldehydo-D-ribose 5-phosphate + D-xylulose 5-phosphate. Its function is as follows. Catalyzes the transfer of a two-carbon ketol group from a ketose donor to an aldose acceptor, via a covalent intermediate with the cofactor thiamine pyrophosphate. The polypeptide is Transketolase (TKT) (Pongo abelii (Sumatran orangutan)).